The following is a 355-amino-acid chain: Chorismate synthase (355 aa).

Arg-46 contacts NADP(+). FMN-binding positions include 123–125 (RAS), 233–234 (NG), Gly-273, 288–292 (KPTPS), and Arg-314.

It belongs to the chorismate synthase family. Homotetramer. It depends on FMNH2 as a cofactor.

The enzyme catalyses 5-O-(1-carboxyvinyl)-3-phosphoshikimate = chorismate + phosphate. Its pathway is metabolic intermediate biosynthesis; chorismate biosynthesis; chorismate from D-erythrose 4-phosphate and phosphoenolpyruvate: step 7/7. Functionally, catalyzes the anti-1,4-elimination of the C-3 phosphate and the C-6 proR hydrogen from 5-enolpyruvylshikimate-3-phosphate (EPSP) to yield chorismate, which is the branch point compound that serves as the starting substrate for the three terminal pathways of aromatic amino acid biosynthesis. This reaction introduces a second double bond into the aromatic ring system. The protein is Chorismate synthase of Campylobacter concisus (strain 13826).